A 165-amino-acid chain; its full sequence is Plastocyanin, chloroplastic (165 aa).

A chloroplast-targeting transit peptide spans 1–66 (MATVTSSAAV…AGILAGNAMA (66 aa)). One can recognise a Plastocyanin-like domain in the interval 67–165 (AEVLLGSSDG…AGMVGKVTVN (99 aa)). Cu cation is bound by residues His-103, Cys-150, His-153, and Met-158.

This sequence belongs to the plastocyanin family. The cofactor is Cu(2+).

The protein localises to the plastid. It is found in the chloroplast thylakoid membrane. In terms of biological role, participates in electron transfer between P700 and the cytochrome b6-f complex in photosystem I. This Silene latifolia subsp. alba (White campion) protein is Plastocyanin, chloroplastic (PETE).